A 557-amino-acid polypeptide reads, in one-letter code: Eukaryotic translation initiation factor 3 subunit D-2 (557 aa).

Residues 292–306 form an RNA gate region; sequence QFDMLTVNETALEPP. The tract at residues 533-557 is disordered; the sequence is FDSDNNDGEETSDDRPFLNSKDNKL. A compositionally biased stretch (basic and acidic residues) spans 545 to 557; sequence DDRPFLNSKDNKL.

It belongs to the eIF-3 subunit D family. Component of the eukaryotic translation initiation factor 3 (eIF-3) complex. The eIF-3 complex interacts with pix.

The protein localises to the cytoplasm. Its function is as follows. mRNA cap-binding component of the eukaryotic translation initiation factor 3 (eIF-3) complex, which is involved in protein synthesis of a specialized repertoire of mRNAs and, together with other initiation factors, stimulates binding of mRNA and methionyl-tRNAi to the 40S ribosome. The eIF-3 complex specifically targets and initiates translation of a subset of mRNAs involved in cell proliferation. In the eIF-3 complex, eif3d specifically recognizes and binds the 7-methylguanosine cap of a subset of mRNAs. This Drosophila grimshawi (Hawaiian fruit fly) protein is Eukaryotic translation initiation factor 3 subunit D-2.